The sequence spans 414 residues: Small ribosomal subunit protein mS46 (414 aa).

The segment covering 20–35 (LNAQQQQRPFSSTTTR) has biased composition (polar residues). 2 disordered regions span residues 20-71 (LNAQ…EAAV) and 168-229 (AGPG…DAPP). Composition is skewed to low complexity over residues 45-59 (PAAAPSTPRAAAPGP) and 168-200 (AGPGAAAGRPRFGAAASPGAGPTGAARRPPFGA). Over residues 205–224 (PAGDKKRSGGSGDKRPRGDD) the composition is skewed to basic and acidic residues.

Belongs to the mitochondrion-specific ribosomal protein mS46 family. Component of the mitochondrial small ribosomal subunit (mt-SSU). Mature N.crassa 74S mitochondrial ribosomes consist of a small (37S) and a large (54S) subunit. The 37S small subunit contains a 16S ribosomal RNA (16S mt-rRNA) and 32 different proteins. The 54S large subunit contains a 23S rRNA (23S mt-rRNA) and 42 different proteins.

Its subcellular location is the mitochondrion. Component of the mitochondrial ribosome (mitoribosome), a dedicated translation machinery responsible for the synthesis of mitochondrial genome-encoded proteins, including at least some of the essential transmembrane subunits of the mitochondrial respiratory chain. The mitoribosomes are attached to the mitochondrial inner membrane and translation products are cotranslationally integrated into the membrane. This chain is Small ribosomal subunit protein mS46 (rsm28), found in Neurospora crassa (strain ATCC 24698 / 74-OR23-1A / CBS 708.71 / DSM 1257 / FGSC 987).